The sequence spans 503 residues: D-alanine--D-alanyl carrier protein ligase (503 aa).

Residue 151–152 (TS) participates in ATP binding. Aspartate 196 is a D-alanine binding site. An ATP-binding site is contributed by 291 to 296 (NTYGPT). Valine 300 lines the D-alanine pocket. ATP is bound by residues aspartate 382, 393–396 (YNGR), and lysine 491. Lysine 491 is a D-alanine binding site.

Belongs to the ATP-dependent AMP-binding enzyme family. DltA subfamily.

It is found in the cytoplasm. The enzyme catalyses holo-[D-alanyl-carrier protein] + D-alanine + ATP = D-alanyl-[D-alanyl-carrier protein] + AMP + diphosphate. It participates in cell wall biogenesis; lipoteichoic acid biosynthesis. Its function is as follows. Catalyzes the first step in the D-alanylation of lipoteichoic acid (LTA), the activation of D-alanine and its transfer onto the D-alanyl carrier protein (Dcp) DltC. In an ATP-dependent two-step reaction, forms a high energy D-alanyl-AMP intermediate, followed by transfer of the D-alanyl residue as a thiol ester to the phosphopantheinyl prosthetic group of the Dcp. D-alanylation of LTA plays an important role in modulating the properties of the cell wall in Gram-positive bacteria, influencing the net charge of the cell wall. The polypeptide is D-alanine--D-alanyl carrier protein ligase (Bacillus anthracis (strain A0248)).